A 358-amino-acid chain; its full sequence is Ferredoxin--NADP reductase (358 aa).

FAD contacts are provided by Asp-38, Gln-46, Tyr-51, Val-91, Phe-126, Asp-301, and Thr-341.

It belongs to the ferredoxin--NADP reductase type 2 family. As to quaternary structure, homodimer. Requires FAD as cofactor.

The catalysed reaction is 2 reduced [2Fe-2S]-[ferredoxin] + NADP(+) + H(+) = 2 oxidized [2Fe-2S]-[ferredoxin] + NADPH. In Paracidovorax citrulli (strain AAC00-1) (Acidovorax citrulli), this protein is Ferredoxin--NADP reductase.